The sequence spans 550 residues: GMP synthase [glutamine-hydrolyzing] (550 aa).

The Glutamine amidotransferase type-1 domain occupies 39-232 (RILILDFGSQ…VHKICGCGGL (194 aa)). Cys-116 (nucleophile) is an active-site residue. Catalysis depends on residues His-206 and Glu-208. Positions 233–425 (WTPEHIIDLR…LGLPHSMIYR (193 aa)) constitute a GMPS ATP-PPase domain. An ATP-binding site is contributed by 260 to 266 (SGGVDSS).

In terms of assembly, homodimer.

The enzyme catalyses XMP + L-glutamine + ATP + H2O = GMP + L-glutamate + AMP + diphosphate + 2 H(+). It functions in the pathway purine metabolism; GMP biosynthesis; GMP from XMP (L-Gln route): step 1/1. Its function is as follows. Catalyzes the synthesis of GMP from XMP. The protein is GMP synthase [glutamine-hydrolyzing] of Acinetobacter baylyi (strain ATCC 33305 / BD413 / ADP1).